The chain runs to 502 residues: Probable cytosol aminopeptidase (502 aa).

The Mn(2+) site is built by lysine 275 and aspartate 280. Lysine 287 is a catalytic residue. Residues aspartate 298, aspartate 357, and glutamate 359 each coordinate Mn(2+). Residue arginine 361 is part of the active site.

Belongs to the peptidase M17 family. The cofactor is Mn(2+).

The protein localises to the cytoplasm. The catalysed reaction is Release of an N-terminal amino acid, Xaa-|-Yaa-, in which Xaa is preferably Leu, but may be other amino acids including Pro although not Arg or Lys, and Yaa may be Pro. Amino acid amides and methyl esters are also readily hydrolyzed, but rates on arylamides are exceedingly low.. It catalyses the reaction Release of an N-terminal amino acid, preferentially leucine, but not glutamic or aspartic acids.. Functionally, presumably involved in the processing and regular turnover of intracellular proteins. Catalyzes the removal of unsubstituted N-terminal amino acids from various peptides. The polypeptide is Probable cytosol aminopeptidase (Ralstonia pickettii (strain 12J)).